The following is a 244-amino-acid chain: UPF0246 protein FMG_1068 (244 aa).

The protein belongs to the UPF0246 family.

The polypeptide is UPF0246 protein FMG_1068 (Finegoldia magna (strain ATCC 29328 / DSM 20472 / WAL 2508) (Peptostreptococcus magnus)).